Here is a 269-residue protein sequence, read N- to C-terminus: Shikimate dehydrogenase (NADP(+)) (269 aa).

Residues 14 to 16 (TLS) and threonine 60 each bind shikimate. The Proton acceptor role is filled by lysine 64. Residue aspartate 76 participates in NADP(+) binding. Residues asparagine 85 and aspartate 100 each contribute to the shikimate site. Residues 122–126 (GAGGA) and methionine 208 each bind NADP(+). Residue tyrosine 210 coordinates shikimate. Glycine 232 serves as a coordination point for NADP(+).

This sequence belongs to the shikimate dehydrogenase family. Homodimer.

It carries out the reaction shikimate + NADP(+) = 3-dehydroshikimate + NADPH + H(+). Its pathway is metabolic intermediate biosynthesis; chorismate biosynthesis; chorismate from D-erythrose 4-phosphate and phosphoenolpyruvate: step 4/7. Its function is as follows. Involved in the biosynthesis of the chorismate, which leads to the biosynthesis of aromatic amino acids. Catalyzes the reversible NADPH linked reduction of 3-dehydroshikimate (DHSA) to yield shikimate (SA). The chain is Shikimate dehydrogenase (NADP(+)) from Caldivirga maquilingensis (strain ATCC 700844 / DSM 13496 / JCM 10307 / IC-167).